A 67-amino-acid chain; its full sequence is Large ribosomal subunit protein bL32 (67 aa).

A compositionally biased stretch (basic residues) spans 1–19; that stretch reads MAVPKRKMSRSNTRARRSQ. Residues 1–21 form a disordered region; the sequence is MAVPKRKMSRSNTRARRSQWK.

It belongs to the bacterial ribosomal protein bL32 family.

The polypeptide is Large ribosomal subunit protein bL32 (Arthrobacter sp. (strain FB24)).